We begin with the raw amino-acid sequence, 167 residues long: NADH-quinone oxidoreductase subunit I (167 aa).

4Fe-4S ferredoxin-type domains are found at residues 59 to 88 and 98 to 127; these read RKYK…IEAQ and VRYD…EGPN. Residues Cys68, Cys71, Cys74, Cys78, Cys107, Cys110, Cys113, and Cys117 each contribute to the [4Fe-4S] cluster site.

This sequence belongs to the complex I 23 kDa subunit family. As to quaternary structure, NDH-1 is composed of 14 different subunits. Subunits NuoA, H, J, K, L, M, N constitute the membrane sector of the complex. It depends on [4Fe-4S] cluster as a cofactor.

The protein resides in the cell inner membrane. The catalysed reaction is a quinone + NADH + 5 H(+)(in) = a quinol + NAD(+) + 4 H(+)(out). NDH-1 shuttles electrons from NADH, via FMN and iron-sulfur (Fe-S) centers, to quinones in the respiratory chain. The immediate electron acceptor for the enzyme in this species is believed to be ubiquinone. Couples the redox reaction to proton translocation (for every two electrons transferred, four hydrogen ions are translocated across the cytoplasmic membrane), and thus conserves the redox energy in a proton gradient. The polypeptide is NADH-quinone oxidoreductase subunit I (Ehrlichia canis (strain Jake)).